The following is a 389-amino-acid chain: MAALRAGKTNNEADQPSSPVLRFGADKPLKLDAGTLLSPFQIAYQTYGTLNDARSNAILVCHALTGDQHVANTNPVTGKPGWWEVLIGPGRIIDTNRFFVICSNVIGGCLGSTGPASTNPATGKPYGLDLPVITIRDMVRAQQMLIDHFGIEKLFCVLGGSMGGMQVLEWASSYPERVFSALPIATGARHSSQNIAFHEVGRQAVMADPDWHGGKYFENGKRPEKGLAVARMAAHITYLSEAALHRKFGRNLQDREALTFGFDADFQIESYLRHQGMTFVDRFDANSYLYMTRSMDYFDLAADHGGRLADAFAGTKTRFCLVSFTSDWLFPTEESRSIVHALNAAGASVSFVEIETDRGHDAFLLDEPELFAAINGFIGSAARARGLSA.

Residues 1 to 21 (MAALRAGKTNNEADQPSSPVL) are disordered. Polar residues predominate over residues 8–18 (KTNNEADQPSS). In terms of domain architecture, AB hydrolase-1 spans 56-366 (NAILVCHALT…DRGHDAFLLD (311 aa)). The active-site Nucleophile is the Ser161. Substrate is bound at residue Arg231. Residues Asp327 and His360 contribute to the active site. Residue Asp361 participates in substrate binding.

The protein belongs to the AB hydrolase superfamily. MetX family. Homodimer.

It localises to the cytoplasm. It catalyses the reaction L-homoserine + acetyl-CoA = O-acetyl-L-homoserine + CoA. Its pathway is amino-acid biosynthesis; L-methionine biosynthesis via de novo pathway; O-acetyl-L-homoserine from L-homoserine: step 1/1. Transfers an acetyl group from acetyl-CoA to L-homoserine, forming acetyl-L-homoserine. The sequence is that of Homoserine O-acetyltransferase from Mesorhizobium japonicum (strain LMG 29417 / CECT 9101 / MAFF 303099) (Mesorhizobium loti (strain MAFF 303099)).